A 515-amino-acid chain; its full sequence is E3 ubiquitin-protein ligase RNF38 (515 aa).

A Bipartite nuclear localization signal 1 motif is present at residues D57 to F71. The tract at residues Y73 to D141 is disordered. Positions M89 to H104 are enriched in polar residues. Residues R115–R131 carry the Bipartite nuclear localization signal 2 motif. Positions R115–R134 are enriched in basic residues. Residues C463–R504 form an RING-type zinc finger.

Widely expressed with highest levels in testis.

The protein localises to the nucleus. The enzyme catalyses S-ubiquitinyl-[E2 ubiquitin-conjugating enzyme]-L-cysteine + [acceptor protein]-L-lysine = [E2 ubiquitin-conjugating enzyme]-L-cysteine + N(6)-ubiquitinyl-[acceptor protein]-L-lysine.. The protein operates within protein modification; protein ubiquitination. Acts as an E3 ubiquitin-protein ligase able to ubiquitinate p53/TP53 which promotes its relocalization to discrete foci associated with PML nuclear bodies. Exhibits preference for UBE2D2 as a E2 enzyme. This Homo sapiens (Human) protein is E3 ubiquitin-protein ligase RNF38.